The following is a 597-amino-acid chain: Arginine--tRNA ligase (597 aa).

The short motif at 138–148 is the 'HIGH' region element; it reads ANPTGPMHVGH.

Belongs to the class-I aminoacyl-tRNA synthetase family. As to quaternary structure, monomer.

It is found in the cytoplasm. It catalyses the reaction tRNA(Arg) + L-arginine + ATP = L-arginyl-tRNA(Arg) + AMP + diphosphate. This is Arginine--tRNA ligase from Nitrobacter winogradskyi (strain ATCC 25391 / DSM 10237 / CIP 104748 / NCIMB 11846 / Nb-255).